Here is a 303-residue protein sequence, read N- to C-terminus: MSELPDRRLLLVHAHPDDETINNGATMARYVAEGAHVTLVTCTLGEEGEVLVPELAHLAADQSDQLGRHRIGELAAAMDELGVTDHRFLGGPGRYRDTGMIYDEQGNAAVPPDTRPDSFWQADLVTAANDLVTVIREVRPQVLVTYDEFGNYGHPDHVQAHRVATYAAALAAARSYREDLGPAWDIPKIYWTAISETAMRSSLRRLRESGDHTTFEGMDPDGPLGPMITPDRFIDCVIPADGYLDRKMNAMKAHATQITVDGPFFALSNNDGNEIFGDEFYRLVKGTAAPGSDGLEHDLFAGL.

H15, D18, and H157 together coordinate Zn(2+).

The protein belongs to the MshB deacetylase family. Zn(2+) is required as a cofactor.

It carries out the reaction 1D-myo-inositol 2-acetamido-2-deoxy-alpha-D-glucopyranoside + H2O = 1D-myo-inositol 2-amino-2-deoxy-alpha-D-glucopyranoside + acetate. Its function is as follows. Catalyzes the deacetylation of 1D-myo-inositol 2-acetamido-2-deoxy-alpha-D-glucopyranoside (GlcNAc-Ins) in the mycothiol biosynthesis pathway. The protein is 1D-myo-inositol 2-acetamido-2-deoxy-alpha-D-glucopyranoside deacetylase of Kribbella flavida (strain DSM 17836 / JCM 10339 / NBRC 14399).